The sequence spans 172 residues: MTPTQKDGPRSNQDIRVPHVQLINDEGQHQGVVSIQEALAMAAEAGLDLVEIVPNAEPPVCKIIDLGKLKYQTQKKAAETRKKQKVIEIKEIKVRPNVDVHDYGVKLKAIHRFIDHGDKVKITLRFRGREMAHQDLGLKLLQRVKEDTSEIAKIELEPKLEGRQMMMVIAPK.

It belongs to the IF-3 family. Monomer.

It localises to the cytoplasm. In terms of biological role, IF-3 binds to the 30S ribosomal subunit and shifts the equilibrium between 70S ribosomes and their 50S and 30S subunits in favor of the free subunits, thus enhancing the availability of 30S subunits on which protein synthesis initiation begins. The protein is Translation initiation factor IF-3 of Bartonella tribocorum (strain CIP 105476 / IBS 506).